The sequence spans 181 residues: ADP-ribosylation factor 1 (181 aa).

A lipid anchor (N-myristoyl glycine) is attached at Gly2. GTP contacts are provided by residues 24-31 (GLDAAGKT), 126-129 (NKQD), and Ala160.

It belongs to the small GTPase superfamily. Arf family. In terms of assembly, may interact with GTPase RAB5b.

It localises to the golgi apparatus membrane. The enzyme catalyses GTP + H2O = GDP + phosphate + H(+). Its activity is regulated as follows. Alternates between an inactive GDP-bound form and an active GTP-bound form. Intrinsic GTPase activity is almost undetectable in vitro. Activated by a guanine nucleotide-exchange factor (GEF) and inactivated by GTPase-activating protein ARFGAP1. Its function is as follows. Small GTPase involved in protein trafficking between different compartments. Modulates vesicle budding and uncoating within the Golgi complex. In its GTP-bound form, triggers the recruitment of coatomer proteins to the Golgi membrane. The hydrolysis of ARF1-bound GTP, which is mediated by ARFGAPs proteins, is required for dissociation of coat proteins from Golgi membranes and vesicles. Regulates the transport of N-acylated AK2 to the parasitophorous vacuole membrane. May be involved in the activation of lipid kinase PIP5K. This Plasmodium falciparum (isolate NF54) protein is ADP-ribosylation factor 1 (ARF1).